Consider the following 138-residue polypeptide: Large ribosomal subunit protein uL16 (138 aa).

Positions 1 to 19 (MLIPRKVAHRKQHHPKRTG) are enriched in basic residues. The segment at 1-22 (MLIPRKVAHRKQHHPKRTGAAK) is disordered.

Belongs to the universal ribosomal protein uL16 family. In terms of assembly, part of the 50S ribosomal subunit.

In terms of biological role, binds 23S rRNA and is also seen to make contacts with the A and possibly P site tRNAs. The sequence is that of Large ribosomal subunit protein uL16 from Parafrankia sp. (strain EAN1pec).